Consider the following 351-residue polypeptide: S-adenosylmethionine:tRNA ribosyltransferase-isomerase (351 aa).

The protein belongs to the QueA family. In terms of assembly, monomer.

It is found in the cytoplasm. It carries out the reaction 7-aminomethyl-7-carbaguanosine(34) in tRNA + S-adenosyl-L-methionine = epoxyqueuosine(34) in tRNA + adenine + L-methionine + 2 H(+). It participates in tRNA modification; tRNA-queuosine biosynthesis. Functionally, transfers and isomerizes the ribose moiety from AdoMet to the 7-aminomethyl group of 7-deazaguanine (preQ1-tRNA) to give epoxyqueuosine (oQ-tRNA). The protein is S-adenosylmethionine:tRNA ribosyltransferase-isomerase of Acinetobacter baumannii (strain SDF).